A 150-amino-acid polypeptide reads, in one-letter code: D-aminoacyl-tRNA deacylase (150 aa).

The Gly-cisPro motif, important for rejection of L-amino acids motif lies at 138-139; that stretch reads GP.

The protein belongs to the DTD family. As to quaternary structure, homodimer.

The protein resides in the cytoplasm. The catalysed reaction is glycyl-tRNA(Ala) + H2O = tRNA(Ala) + glycine + H(+). It catalyses the reaction a D-aminoacyl-tRNA + H2O = a tRNA + a D-alpha-amino acid + H(+). Its function is as follows. An aminoacyl-tRNA editing enzyme that deacylates mischarged D-aminoacyl-tRNAs. Also deacylates mischarged glycyl-tRNA(Ala), protecting cells against glycine mischarging by AlaRS. Acts via tRNA-based rather than protein-based catalysis; rejects L-amino acids rather than detecting D-amino acids in the active site. By recycling D-aminoacyl-tRNA to D-amino acids and free tRNA molecules, this enzyme counteracts the toxicity associated with the formation of D-aminoacyl-tRNA entities in vivo and helps enforce protein L-homochirality. The polypeptide is D-aminoacyl-tRNA deacylase (Azobacteroides pseudotrichonymphae genomovar. CFP2).